A 344-amino-acid polypeptide reads, in one-letter code: Uroporphyrinogen decarboxylase (344 aa).

Substrate-binding positions include 23–27 (RQAGR), Asp-73, Tyr-149, Thr-204, and His-321.

Belongs to the uroporphyrinogen decarboxylase family. In terms of assembly, homodimer.

It is found in the cytoplasm. The enzyme catalyses uroporphyrinogen III + 4 H(+) = coproporphyrinogen III + 4 CO2. It functions in the pathway porphyrin-containing compound metabolism; protoporphyrin-IX biosynthesis; coproporphyrinogen-III from 5-aminolevulinate: step 4/4. Catalyzes the decarboxylation of four acetate groups of uroporphyrinogen-III to yield coproporphyrinogen-III. The protein is Uroporphyrinogen decarboxylase of Francisella tularensis subsp. mediasiatica (strain FSC147).